Consider the following 233-residue polypeptide: Large ribosomal subunit protein uL1 (233 aa).

It belongs to the universal ribosomal protein uL1 family. Part of the 50S ribosomal subunit.

Binds directly to 23S rRNA. The L1 stalk is quite mobile in the ribosome, and is involved in E site tRNA release. In terms of biological role, protein L1 is also a translational repressor protein, it controls the translation of the L11 operon by binding to its mRNA. The protein is Large ribosomal subunit protein uL1 of Photobacterium profundum (strain SS9).